The chain runs to 100 residues: Cell division topological specificity factor (100 aa).

It belongs to the MinE family.

Its function is as follows. Prevents the cell division inhibition by proteins MinC and MinD at internal division sites while permitting inhibition at polar sites. This ensures cell division at the proper site by restricting the formation of a division septum at the midpoint of the long axis of the cell. This chain is Cell division topological specificity factor, found in Blochmanniella floridana.